Here is a 154-residue protein sequence, read N- to C-terminus: Interleukin-2 (154 aa).

The first 20 residues, 1-20, serve as a signal peptide directing secretion; sequence MYRMQLLSCIALSLALITNS. An O-linked (GalNAc...) threonine glycan is attached at threonine 23. Cysteine 78 and cysteine 126 form a disulfide bridge.

Belongs to the IL-2 family.

It is found in the secreted. In terms of biological role, cytokine produced by activated CD4-positive helper T-cells and to a lesser extend activated CD8-positive T-cells and natural killer (NK) cells that plays pivotal roles in the immune response and tolerance. Binds to a receptor complex composed of either the high-affinity trimeric IL-2R (IL2RA/CD25, IL2RB/CD122 and IL2RG/CD132) or the low-affinity dimeric IL-2R (IL2RB and IL2RG). Interaction with the receptor leads to oligomerization and conformation changes in the IL-2R subunits resulting in downstream signaling starting with phosphorylation of JAK1 and JAK3. In turn, JAK1 and JAK3 phosphorylate the receptor to form a docking site leading to the phosphorylation of several substrates including STAT5. This process leads to activation of several pathways including STAT, phosphoinositide-3-kinase/PI3K and mitogen-activated protein kinase/MAPK pathways. Functions as a T-cell growth factor and can increase NK-cell cytolytic activity as well. Promotes strong proliferation of activated B-cells and subsequently immunoglobulin production. Plays a pivotal role in regulating the adaptive immune system by controlling the survival and proliferation of regulatory T-cells, which are required for the maintenance of immune tolerance. Moreover, participates in the differentiation and homeostasis of effector T-cell subsets, including Th1, Th2, Th17 as well as memory CD8-positive T-cells. This Papio hamadryas (Hamadryas baboon) protein is Interleukin-2 (IL2).